The following is an 872-amino-acid chain: DNA polymerase 1 (872 aa).

The protein belongs to the DNA polymerase type-B family.

The enzyme catalyses DNA(n) + a 2'-deoxyribonucleoside 5'-triphosphate = DNA(n+1) + diphosphate. The chain is DNA polymerase 1 (pol-alpha) from Sulfurisphaera ohwakuensis.